The sequence spans 705 residues: Ribonuclease R (705 aa).

The region spanning 240 to 567 (RRDLREQLCF…VHRLLKKALR (328 aa)) is the RNB domain. The 82-residue stretch at 615-696 (GEEFIGIITG…ERARVEFELI (82 aa)) folds into the S1 motif domain.

The protein belongs to the RNR ribonuclease family. RNase R subfamily.

It is found in the cytoplasm. It carries out the reaction Exonucleolytic cleavage in the 3'- to 5'-direction to yield nucleoside 5'-phosphates.. 3'-5' exoribonuclease that releases 5'-nucleoside monophosphates and is involved in maturation of structured RNAs. This chain is Ribonuclease R, found in Aquifex aeolicus (strain VF5).